The primary structure comprises 440 residues: Chromosome partition protein MukF (440 aa).

Residues 208-236 (LSETSGTLRELQDTLEAAGDKLQANLLRI) form a leucine-zipper region.

This sequence belongs to the MukF family. Interacts, and probably forms a ternary complex, with MukE and MukB via its C-terminal region. The complex formation is stimulated by calcium or magnesium. It is required for an interaction between MukE and MukB.

The protein resides in the cytoplasm. It is found in the nucleoid. Involved in chromosome condensation, segregation and cell cycle progression. May participate in facilitating chromosome segregation by condensation DNA from both sides of a centrally located replisome during cell division. Not required for mini-F plasmid partitioning. Probably acts via its interaction with MukB and MukE. Overexpression results in anucleate cells. It has a calcium binding activity. The polypeptide is Chromosome partition protein MukF (Escherichia coli O17:K52:H18 (strain UMN026 / ExPEC)).